Here is a 794-residue protein sequence, read N- to C-terminus: Phospholipase A-2-activating protein (794 aa).

WD repeat units follow at residues 17–56 (HELD…RGFT), 63–107 (GHSN…PLYI), 110–148 (GHKD…MTLQ), 149–188 (GHTA…RTFL), 190–227 (HEDC…LEVY), 229–268 (GHTN…QTIR), and 270–307 (PAQS…TASA). Serine 50 is modified (phosphoserine). Residues 366 to 465 (QWSVSDGRWI…KGQTLGLGNT (100 aa)) form the PFU domain. Position 529 is an N6-acetyllysine (lysine 529). Residues 533 to 793 (IYFPKKEALT…SECCRLVLHL (261 aa)) form the PUL domain. ARM repeat units lie at residues 546-588 (ANPT…NNSS), 589-620 (EKPT…LRLS), 621-668 (IKHP…CFVS), 669-714 (QAGQ…CFHK), 715-754 (DHNI…LISD), and 755-794 (DSNA…LHLL).

Belongs to the WD repeat PLAP family. As to quaternary structure, interacts with ubiquitin. Interacts with UBXN6, VCP and YOD1; may form a complex involved in macroautophagy. In terms of tissue distribution, expressed in the brain, with highest levels in hippocampal neurons, cerebellar granular cell layer and Purkinje cells.

The protein localises to the nucleus. The protein resides in the cytoplasm. Its subcellular location is the synapse. Plays a role in protein ubiquitination, sorting and degradation through its association with VCP. Involved in ubiquitin-mediated membrane proteins trafficking to late endosomes in an ESCRT-dependent manner, and hence plays a role in synaptic vesicle recycling. May play a role in macroautophagy, regulating for instance the clearance of damaged lysosomes. Plays a role in cerebellar Purkinje cell development. Positively regulates cytosolic and calcium-independent phospholipase A2 activities in a tumor necrosis factor alpha (TNF-alpha)- or lipopolysaccharide (LPS)-dependent manner, and hence prostaglandin E2 biosynthesis. The sequence is that of Phospholipase A-2-activating protein (Plaa) from Mus musculus (Mouse).